We begin with the raw amino-acid sequence, 141 residues long: Nucleoside diphosphate kinase (141 aa).

Lys11, Phe59, Arg87, Thr93, Arg104, and Asn114 together coordinate ATP. His117 functions as the Pros-phosphohistidine intermediate in the catalytic mechanism.

This sequence belongs to the NDK family. In terms of assembly, homotetramer. Mg(2+) is required as a cofactor.

It localises to the cytoplasm. The enzyme catalyses a 2'-deoxyribonucleoside 5'-diphosphate + ATP = a 2'-deoxyribonucleoside 5'-triphosphate + ADP. It carries out the reaction a ribonucleoside 5'-diphosphate + ATP = a ribonucleoside 5'-triphosphate + ADP. Major role in the synthesis of nucleoside triphosphates other than ATP. The ATP gamma phosphate is transferred to the NDP beta phosphate via a ping-pong mechanism, using a phosphorylated active-site intermediate. The polypeptide is Nucleoside diphosphate kinase (Haemophilus influenzae (strain 86-028NP)).